Consider the following 975-residue polypeptide: Translation initiation factor IF-2 (975 aa).

2 stretches are compositionally biased toward basic and acidic residues: residues 48–63 (DHLR…DKRK) and 120–177 (AELK…EAAA). Disordered regions lie at residues 48-85 (DHLR…KART) and 98-390 (KRDD…PTEP). Positions 178-211 (KRAAAAQAEAAQQAAAAREQAQRAQSEPAEQSAQ) are enriched in low complexity. Positions 212–263 (DEARAAAERAAQREAAKKAEDAAREAADKARAEQEEIRKRREAAEAEARAIR) are enriched in basic and acidic residues. Residues 302 to 330 (KPAGEAAAARPAAKKPASGAPAPAAAPAG) show a composition bias toward low complexity. Over residues 359–372 (SSGGVDRGWRGGPK) the composition is skewed to gly residues. The region spanning 475–644 (PRPPVVTVMG…LLQAEVLELK (170 aa)) is the tr-type G domain. Residues 484–491 (GHVDHGKT) form a G1 region. 484-491 (GHVDHGKT) provides a ligand contact to GTP. The segment at 509–513 (GITQH) is G2. Residues 530 to 533 (DTPG) are G3. Residues 530–534 (DTPGH) and 584–587 (NKID) contribute to the GTP site. Positions 584–587 (NKID) are G4. A G5 region spans residues 620–622 (SAK).

It belongs to the TRAFAC class translation factor GTPase superfamily. Classic translation factor GTPase family. IF-2 subfamily.

It localises to the cytoplasm. One of the essential components for the initiation of protein synthesis. Protects formylmethionyl-tRNA from spontaneous hydrolysis and promotes its binding to the 30S ribosomal subunits. Also involved in the hydrolysis of GTP during the formation of the 70S ribosomal complex. The chain is Translation initiation factor IF-2 from Burkholderia pseudomallei (strain 1106a).